A 316-amino-acid chain; its full sequence is N-acetylmuramic acid 6-phosphate etherase (316 aa).

A disordered region spans residues 1 to 23 (MAGFDPTLQPSDDRGHLLTEQSN). An SIS domain is found at 66-229 (ISKRLSSGGR…STTVMVRLGK (164 aa)). Residue E94 is the Proton donor of the active site. E125 is a catalytic residue.

The protein belongs to the GCKR-like family. MurNAc-6-P etherase subfamily. As to quaternary structure, homodimer.

The enzyme catalyses N-acetyl-D-muramate 6-phosphate + H2O = N-acetyl-D-glucosamine 6-phosphate + (R)-lactate. It functions in the pathway amino-sugar metabolism; N-acetylmuramate degradation. Functionally, specifically catalyzes the cleavage of the D-lactyl ether substituent of MurNAc 6-phosphate, producing GlcNAc 6-phosphate and D-lactate. The sequence is that of N-acetylmuramic acid 6-phosphate etherase from Synechococcus sp. (strain CC9902).